Consider the following 345-residue polypeptide: Cell division control protein 2 homolog 2 (345 aa).

The disordered stretch occupies residues 1-44; sequence MQVQVQEGQTACDGSLRPLPSAGPASFVPRSLRPAPLRGTSTPD. The region spanning 46–328 is the Protein kinase domain; the sequence is YSRIEKVGEG…AYEALQHSYF (283 aa). Residues 52 to 60 and Lys-75 each bind ATP; that span reads VGEGSYGIV. The residue at position 56 (Ser-56) is a Phosphoserine. A Phosphotyrosine modification is found at Tyr-57. Asp-168 serves as the catalytic Proton acceptor.

It belongs to the protein kinase superfamily. CMGC Ser/Thr protein kinase family. CDC2/CDKX subfamily. As to quaternary structure, forms a stable but non-covalent complex with a regulatory subunit and with a cyclin.

It catalyses the reaction L-seryl-[protein] + ATP = O-phospho-L-seryl-[protein] + ADP + H(+). The catalysed reaction is L-threonyl-[protein] + ATP = O-phospho-L-threonyl-[protein] + ADP + H(+). Phosphorylation at Ser-56 or Tyr-57 inactivates the enzyme. Functionally, probably involved in the control of the cell cycle. This is Cell division control protein 2 homolog 2 (CRK2) from Trypanosoma brucei brucei.